Consider the following 668-residue polypeptide: S-adenosyl-L-methionine-dependent tRNA 4-demethylwyosine synthase TYW1B (668 aa).

The Flavodoxin-like domain occupies 37-191 (CVQIVIEMQG…NFRAWKTKFI (155 aa)). FMN contacts are provided by residues 43–47 (EMQGF) and 130–162 (VFGL…HRVM). The disordered stretch occupies residues 202-269 (RKKSCGGHCK…QSLNSIVDVE (68 aa)). 2 stretches are compositionally biased toward basic and acidic residues: residues 213–223 (GKCESHQHGSE) and 233–243 (DELHHRDTKEE). Residues 244-255 (EPFESSSEEEFG) are compositionally biased toward acidic residues. The region spanning 336–580 (LWNESHRCME…VDLIPEYEIA (245 aa)) is the Radical SAM core domain. The [4Fe-4S] cluster site is built by Cys-352, Cys-356, and Cys-359.

It belongs to the TYW1 family. [4Fe-4S] cluster is required as a cofactor.

It catalyses the reaction N(1)-methylguanosine(37) in tRNA(Phe) + pyruvate + S-adenosyl-L-methionine = 4-demethylwyosine(37) in tRNA(Phe) + 5'-deoxyadenosine + L-methionine + CO2 + H2O. Its pathway is tRNA modification; wybutosine-tRNA(Phe) biosynthesis. Probable component of the wybutosine biosynthesis pathway. Wybutosine is a hyper modified guanosine with a tricyclic base found at the 3'-position adjacent to the anticodon of eukaryotic phenylalanine tRNA. Catalyzes the condensation of N-methylguanine with 2 carbon atoms from pyruvate to form the tricyclic 4-demethylwyosine, an intermediate in wybutosine biosynthesis. This Homo sapiens (Human) protein is S-adenosyl-L-methionine-dependent tRNA 4-demethylwyosine synthase TYW1B (TYW1B).